Reading from the N-terminus, the 443-residue chain is Fatty acid desaturase 3 (443 aa).

The Cytoplasmic segment spans residues 1-130 (MGGVGEPDWE…EDMKLFEAKP (130 aa)). The region spanning 18–95 (LPTLRWEQVR…LQPLLIGELA (78 aa)) is the Cytochrome b5 heme-binding domain. The helical transmembrane segment at 131–151 (AFFGLLLGHILAMEVLAWLMI) threads the bilayer. Position 152 (Y152) is a topological domain, lumenal. The chain crosses the membrane as a helical span at residues 153-173 (MLGPGWVPSTLAALILAISQA). At 174 to 259 (QSWCLQHDLG…KKKRRYLPYN (86 aa)) the chain is on the cytoplasmic side. The short motif at 180–184 (HDLGH) is the Histidine box-1 element. A Histidine box-2 motif is present at residues 217 to 221 (HFQHH). The helical transmembrane segment at 260 to 280 (HQHLYFFLIGPPLLTLVNFEV) threads the bilayer. Residues 281–282 (EN) are Lumenal-facing. Residues 283–303 (LAYMLVCMQWMDLLWAASFYA) traverse the membrane as a helical segment. Position 304 (R304) is a topological domain, cytoplasmic. Residues 305–325 (FLLSYIPFYGIPGALLLFVAV) form a helical membrane-spanning segment. Over 326-443 (RVLESHWFVW…NVWLEAYLHQ (118 aa)) the chain is Lumenal. Positions 381–385 (QIEHH) match the Histidine box-3 motif.

This sequence belongs to the fatty acid desaturase type 1 family.

The protein localises to the endoplasmic reticulum membrane. The enzyme catalyses an N-acylsphing-4-enine + 2 Fe(II)-[cytochrome b5] + O2 + 2 H(+) = an N-acyl-sphinga-4E,14Z-dienine + 2 Fe(III)-[cytochrome b5] + 2 H2O. The catalysed reaction is N-(hexanoyl)sphing-4-enine + 2 Fe(II)-[cytochrome b5] + O2 + 2 H(+) = N-hexanoyl-sphinga-4E,14Z-dienine + 2 Fe(III)-[cytochrome b5] + 2 H2O. It carries out the reaction sphing-4-enine + 2 Fe(II)-[cytochrome b5] + O2 + 2 H(+) = sphinga-4E,14Z-dienine + 2 Fe(III)-[cytochrome b5] + 2 H2O. It catalyses the reaction (11E)-octadecenoyl-CoA + 2 Fe(II)-[cytochrome b5] + O2 + 2 H(+) = (11E,13Z)-octadecadienoyl-CoA + 2 Fe(III)-[cytochrome b5] + 2 H2O. The enzyme catalyses N-acyl-1-deoxysphinganine + 2 Fe(II)-[cytochrome b5] + O2 + 2 H(+) = N-acyl-1-deoxysphing-14Z-enine + 2 Fe(III)-[cytochrome b5] + 2 H2O. The catalysed reaction is an N-acylsphinganine + 2 Fe(II)-[cytochrome b5] + O2 + 2 H(+) = an N-acylsphing-14Z-enine + 2 Fe(III)-[cytochrome b5] + 2 H2O. The protein operates within lipid metabolism; polyunsaturated fatty acid biosynthesis. Its pathway is lipid metabolism; sphingolipid metabolism. Mammals have different sphingoid bases that differ in their length and/or pattern of desaturation and hydroxyl groups. The predominant sphingoid base that comprises mammalian ceramides is sphing-4-enine (sphingosine or SPH) which has a trans (E) desaturation at carbon 4. FADS3 is a desaturase that introduces a cis (Z) double bond between carbon 14 and carbon 15 of the sphingoid base (also known as long chain base, LCB), producing LCBs such as sphinga-4,14-dienine (SPD, d18:2(4E,14Z)) from SPH. Prefers SPH-containing ceramides (N-acylsphing-4-enines) as substrates. Capable of metabolizing also the SPH in its free form. SPD ceramides occur widely in mammalian tissues and cells. Due to their unusual structure containing a cis double bond, SPD ceramides may have an opposite, negative role in lipid microdomain formation relative to conventional ceramides. Could be involved in the detoxification of 1-deoxy sphingolipids, by desaturating the cytotoxic 1-deoxysphinganine (1-deoxySA, m18:0), produced under pathological conditions, to 1-deoxysphingenine (1-deoxysphingosine, 1-deoxySO, m18:1). Although prefers SPH-containing ceramides (N-acylsphing-4-enines) as substrates, it also exhibits activity toward dihydrosphingosine-containing CERs (N-acylsphinganines) and produces 14Z-SPH-containing sphingolipids. Its desaturase mechanism involves an electron transfer facilitated by cytochrome b5. FADS3 also acts as a methyl-end fatty acyl coenzyme A (CoA) desaturase that introduces a cis double bond between the preexisting double bond and the terminal methyl group of the fatty acyl chain. Desaturates (11E)-octadecenoate (trans-vaccenoate, the predominant trans fatty acid in human milk) at carbon 13 to generate (11E,13Z)-octadecadienoate (also known as conjugated linoleic acid 11E,13Z-CLA). The protein is Fatty acid desaturase 3 of Bos taurus (Bovine).